Here is a 115-residue protein sequence, read N- to C-terminus: Ubiquitin-related modifier 1 (115 aa).

1-thioglycine is present on Gly-115. Residue Gly-115 forms a Glycyl lysine isopeptide (Gly-Lys) (interchain with K-? in acceptor proteins) linkage.

It belongs to the URM1 family. C-terminal thiocarboxylation occurs in 2 steps, it is first acyl-adenylated (-COAMP) via the hesA/moeB/thiF part of UBA4, then thiocarboxylated (-COSH) via the rhodanese domain of UBA4.

It is found in the cytoplasm. The protein operates within tRNA modification; 5-methoxycarbonylmethyl-2-thiouridine-tRNA biosynthesis. Acts as a sulfur carrier required for 2-thiolation of mcm(5)S(2)U at tRNA wobble positions of cytosolic tRNA(Lys), tRNA(Glu) and tRNA(Gln). Serves as sulfur donor in tRNA 2-thiolation reaction by being thiocarboxylated (-COSH) at its C-terminus by the MOCS3 homolog UBA4. The sulfur is then transferred to tRNA to form 2-thiolation of mcm(5)S(2)U. Prior mcm(5) tRNA modification by the elongator complex is required for 2-thiolation. Also acts as a ubiquitin-like protein (UBL) that is covalently conjugated via an isopeptide bond to lysine residues of target proteins such as AHP1. The thiocarboxylated form serves as substrate for conjugation and oxidative stress specifically induces the formation of UBL-protein conjugates. The chain is Ubiquitin-related modifier 1 from Coccidioides immitis (strain RS) (Valley fever fungus).